We begin with the raw amino-acid sequence, 505 residues long: MRGGTVQINWHEQQPVLTLDFHPVSRRLATGGSDHDIKIWVIASDDSDKKLPTATYHSSLSSHSSAVNVLRFSPSGENLASGADGGGIIIWKLHSTDDGEAWKVQKTLLFHHKDVLDLQWSQDGAFLVSASVDNSCIVWDAIKGSVQQKLEGHLHYVQGVAWDPLGQYIASLSSDRTCRIYANKPQGKSKNTDRMNFVCQHTLVKAEHQNHDESKPPVRAHLFHDETLPSFFRRLAWSPDGSFLVLPAGLCKYSSEVINTAYVMSRRDLSRPAIQLPGASKAIVAVRFCPVLFKLRGSQSDCFFKLPYRVIFAVATLNSLYVYDTESVAPILIHAGLHYAAITDIAWSSDAKYLAVSSRDCFCTIIEFENEELGLPYNLSGTKELDEGNTNCENMKPLKVDSMEIDAGSSKAKIKASSAAVEVTPSPPVLAQNNILMTKDVAEGNATSENDRPSAVDNMEVDVGENKAKMEVTPVAVQVTAPPVSTKNSASSKPTKKRITPIAIN.

7 WD repeats span residues 11-50 (HEQQPVLTLDFHPVSRRLATGGSDHDIKIWVIASDDSDKK), 62-101 (SHSSAVNVLRFSPSGENLASGADGGGIIIWKLHSTDDGEA), 110-149 (FHHKDVLDLQWSQDGAFLVSASVDNSCIVWDAIKGSVQQK), 152-191 (GHLHYVQGVAWDPLGQYIASLSSDRTCRIYANKPQGKSKN), 223-268 (FHDE…SRRD), 278-333 (GASK…PILI), and 337-378 (LHYA…LPYN). Residues 479–505 (VTAPPVSTKNSASSKPTKKRITPIAIN) form a disordered region.

This sequence belongs to the WD repeat HIR1 family. As to quaternary structure, component of the chromatin assembly factor 1 (CAF-1) complex, composed of FSM (FAS1), FAS2 and MSI1.

The protein localises to the nucleus. Component of the chromatin assembly factor complex (CAF-1) involved in chromatin assembly following DNA replication and DNA repair. Required for several aspects of development, including apical meristem maintenance by regulating the durations of the S- and G2-phases of the cell cycle through its chromatin assembly activity. The chain is Chromatin assembly factor 1 subunit FAS2 homolog (FAS2) from Oryza sativa subsp. japonica (Rice).